We begin with the raw amino-acid sequence, 251 residues long: MQYQVDTHTHTVASTHAYSTIHDYLAVAKQKGILLFATTDHGPAMADAPHFWHFVNLRVLPRMVDGVGILRGIEANIKNIDGEIDFFGDYLKQLDIVLAGFHEPVYPPSDKATHTEAMINTIKSGKVDIITHPGNPAYPIDIDAVARAAAEYGVALEINNSSFEVSRKGSEANCTAIAKAAKEFGTILVMGSDSHVAFSLGGFERALAIIDAAGYPKSQLLNRSPSVLLGFLAQRGHHTVADLQALFDEAV.

9 residues coordinate Zn(2+): histidine 8, histidine 10, histidine 16, histidine 41, glutamate 74, histidine 102, histidine 132, aspartate 193, and histidine 195.

Belongs to the PHP family. Zn(2+) is required as a cofactor.

The protein is Probable phosphatase Sputcn32_1369 of Shewanella putrefaciens (strain CN-32 / ATCC BAA-453).